We begin with the raw amino-acid sequence, 110 residues long: UPF0122 protein SaurJH9_1295 (110 aa).

The protein belongs to the UPF0122 family.

In terms of biological role, might take part in the signal recognition particle (SRP) pathway. This is inferred from the conservation of its genetic proximity to ftsY/ffh. May be a regulatory protein. The sequence is that of UPF0122 protein SaurJH9_1295 from Staphylococcus aureus (strain JH9).